The following is a 307-amino-acid chain: UDP-3-O-acyl-N-acetylglucosamine deacetylase (307 aa).

3 residues coordinate Zn(2+): histidine 80, histidine 239, and aspartate 243. The Proton donor role is filled by histidine 266.

It belongs to the LpxC family. It depends on Zn(2+) as a cofactor.

The enzyme catalyses a UDP-3-O-[(3R)-3-hydroxyacyl]-N-acetyl-alpha-D-glucosamine + H2O = a UDP-3-O-[(3R)-3-hydroxyacyl]-alpha-D-glucosamine + acetate. Its pathway is glycolipid biosynthesis; lipid IV(A) biosynthesis; lipid IV(A) from (3R)-3-hydroxytetradecanoyl-[acyl-carrier-protein] and UDP-N-acetyl-alpha-D-glucosamine: step 2/6. Its function is as follows. Catalyzes the hydrolysis of UDP-3-O-myristoyl-N-acetylglucosamine to form UDP-3-O-myristoylglucosamine and acetate, the committed step in lipid A biosynthesis. The sequence is that of UDP-3-O-acyl-N-acetylglucosamine deacetylase from Neisseria meningitidis serogroup C / serotype 2a (strain ATCC 700532 / DSM 15464 / FAM18).